Here is a 289-residue protein sequence, read N- to C-terminus: Shikimate dehydrogenase (NADP(+)) (289 aa).

Shikimate contacts are provided by residues serine 19–serine 21 and threonine 66. Catalysis depends on lysine 70, which acts as the Proton acceptor. Shikimate contacts are provided by asparagine 91 and aspartate 106. NADP(+) contacts are provided by residues glycine 131–alanine 135 and leucine 229. Tyrosine 231 provides a ligand contact to shikimate. Residue glycine 252 participates in NADP(+) binding.

Belongs to the shikimate dehydrogenase family. As to quaternary structure, homodimer.

The enzyme catalyses shikimate + NADP(+) = 3-dehydroshikimate + NADPH + H(+). The protein operates within metabolic intermediate biosynthesis; chorismate biosynthesis; chorismate from D-erythrose 4-phosphate and phosphoenolpyruvate: step 4/7. Its function is as follows. Involved in the biosynthesis of the chorismate, which leads to the biosynthesis of aromatic amino acids. Catalyzes the reversible NADPH linked reduction of 3-dehydroshikimate (DHSA) to yield shikimate (SA). This Trichormus variabilis (strain ATCC 29413 / PCC 7937) (Anabaena variabilis) protein is Shikimate dehydrogenase (NADP(+)).